A 356-amino-acid chain; its full sequence is Growth hormone-regulated TBC protein 1-A (356 aa).

Residues 1–29 (MEERDRTGRTGQPQHRINQPSTARERANS) are disordered. The segment covering 9–22 (RTGQPQHRINQPST) has biased composition (polar residues). One can recognise a Rab-GAP TBC domain in the interval 87–277 (GVPNEHRPLV…RIWDCLFYEG (191 aa)).

May act as a GTPase-activating protein for Rab family protein(s). This is Growth hormone-regulated TBC protein 1-A (grtp1a) from Danio rerio (Zebrafish).